We begin with the raw amino-acid sequence, 101 residues long: Aspartyl/glutamyl-tRNA(Asn/Gln) amidotransferase subunit C (101 aa).

This sequence belongs to the GatC family. As to quaternary structure, heterotrimer of A, B and C subunits.

It carries out the reaction L-glutamyl-tRNA(Gln) + L-glutamine + ATP + H2O = L-glutaminyl-tRNA(Gln) + L-glutamate + ADP + phosphate + H(+). The enzyme catalyses L-aspartyl-tRNA(Asn) + L-glutamine + ATP + H2O = L-asparaginyl-tRNA(Asn) + L-glutamate + ADP + phosphate + 2 H(+). Allows the formation of correctly charged Asn-tRNA(Asn) or Gln-tRNA(Gln) through the transamidation of misacylated Asp-tRNA(Asn) or Glu-tRNA(Gln) in organisms which lack either or both of asparaginyl-tRNA or glutaminyl-tRNA synthetases. The reaction takes place in the presence of glutamine and ATP through an activated phospho-Asp-tRNA(Asn) or phospho-Glu-tRNA(Gln). The protein is Aspartyl/glutamyl-tRNA(Asn/Gln) amidotransferase subunit C of Enterococcus faecalis (strain ATCC 700802 / V583).